Here is a 471-residue protein sequence, read N- to C-terminus: MGMSVNSDPAALVPEITLLVSAVTGLLAGAWTPRERQGTIHVLAALATVVGLVATALAARQPDETVFGTYVLDTATHTTRAIVLVAVLALIALSRDTVAGHKRETEFVVLLQLGALGSIALAGAGDLIMLFAAFLLASVPFYALAGWAKQGRATEAALKYYLAGALAGVTTAAGVTILFGVAGATDYEKVADGISRGPAAAAAVGLIAVLAGLAFKAGAVPAHFWVPDIAEGTPPPVAAALTTVPKIGALVAFYRLLDTAIPAAAIDWRLITAVLATAGMTLGNLAAFAQTSALRMLGYSTVSQVGYLLMAVAVAGRTPLAQPALLLYLAAYALTNIAGFAVVATTHEHRIDRYRGLFHRDPLLALALTVALLGLVGTPPTAVFVGKLEIFTAAMDGGLAWLVVIAALNTLASLFYYLRWITPAFRPAEDDSAAVTPPSRWARAVALTTAALTLLLGIGSGIVLNALGASG.

The next 14 helical transmembrane spans lie at 11 to 31, 39 to 59, 81 to 101, 105 to 125, 127 to 147, 162 to 182, 200 to 220, 234 to 254, 270 to 290, 296 to 316, 324 to 344, 365 to 385, 398 to 418, and 444 to 464; these read ALVP…AGAW, TIHV…ALAA, AIVL…VAGH, TEFV…AGAG, LIML…LAGW, LAGA…FGVA, AAAA…AGAV, PPPV…VAFY, LITA…AFAQ, MLGY…AVAG, ALLL…AVVA, ALAL…AVFV, GLAW…FYYL, and AVAL…GIVL.

It belongs to the complex I subunit 2 family. As to quaternary structure, NDH-1 is composed of 14 different subunits. Subunits NuoA, H, J, K, L, M, N constitute the membrane sector of the complex.

The protein resides in the cell membrane. The enzyme catalyses a quinone + NADH + 5 H(+)(in) = a quinol + NAD(+) + 4 H(+)(out). Its function is as follows. NDH-1 shuttles electrons from NADH, via FMN and iron-sulfur (Fe-S) centers, to quinones in the respiratory chain. The immediate electron acceptor for the enzyme in this species is believed to be a menaquinone. Couples the redox reaction to proton translocation (for every two electrons transferred, four hydrogen ions are translocated across the cytoplasmic membrane), and thus conserves the redox energy in a proton gradient. The sequence is that of NADH-quinone oxidoreductase subunit N 1 from Streptomyces griseus subsp. griseus (strain JCM 4626 / CBS 651.72 / NBRC 13350 / KCC S-0626 / ISP 5235).